A 163-amino-acid polypeptide reads, in one-letter code: MLTKIGLYTGSFDPVTNGHLDIVKRASGLFDQIYVGIFDNPTKKSYFKLEVRKAMLTQALADFTNVIVVTSHERLAIDVAKELRVTHLIRGLRNATDFEYEENLEYFNHLLAPNIETVYLISRNKWQALSSSRVRELIHFQSSLEDLVPQSVIAQVEKMNEKT.

A substrate-binding site is contributed by S11. ATP contacts are provided by residues 11 to 12 (SF) and H19. Substrate contacts are provided by K43, A76, and R90. ATP-binding positions include 91–93 (GLR), E101, and 126–132 (WQALSSS).

It belongs to the bacterial CoaD family. As to quaternary structure, homohexamer. Mg(2+) is required as a cofactor.

It localises to the cytoplasm. It carries out the reaction (R)-4'-phosphopantetheine + ATP + H(+) = 3'-dephospho-CoA + diphosphate. It participates in cofactor biosynthesis; coenzyme A biosynthesis; CoA from (R)-pantothenate: step 4/5. Its function is as follows. Reversibly transfers an adenylyl group from ATP to 4'-phosphopantetheine, yielding dephospho-CoA (dPCoA) and pyrophosphate. This Streptococcus pyogenes serotype M2 (strain MGAS10270) protein is Phosphopantetheine adenylyltransferase.